The chain runs to 366 residues: Transaldolase (366 aa).

Lys-140 acts as the Schiff-base intermediate with substrate in catalysis.

It belongs to the transaldolase family. Type 2 subfamily.

Its subcellular location is the cytoplasm. The catalysed reaction is D-sedoheptulose 7-phosphate + D-glyceraldehyde 3-phosphate = D-erythrose 4-phosphate + beta-D-fructose 6-phosphate. It functions in the pathway carbohydrate degradation; pentose phosphate pathway; D-glyceraldehyde 3-phosphate and beta-D-fructose 6-phosphate from D-ribose 5-phosphate and D-xylulose 5-phosphate (non-oxidative stage): step 2/3. Its function is as follows. Transaldolase is important for the balance of metabolites in the pentose-phosphate pathway. This is Transaldolase from Saccharopolyspora erythraea (strain ATCC 11635 / DSM 40517 / JCM 4748 / NBRC 13426 / NCIMB 8594 / NRRL 2338).